A 103-amino-acid polypeptide reads, in one-letter code: MDIQYLMRQAKKLEKAMADAKEKLAEIAVEAESGGGLVKVAMNGKCEVTRLTVDPKAIDPNDKAMLEDLITAAVNAAVEKARTAADESMSKATGGIKIPGIAG.

The protein belongs to the YbaB/EbfC family. As to quaternary structure, homodimer.

Its subcellular location is the cytoplasm. It is found in the nucleoid. In terms of biological role, binds to DNA and alters its conformation. May be involved in regulation of gene expression, nucleoid organization and DNA protection. The sequence is that of Nucleoid-associated protein Adeh_3636 from Anaeromyxobacter dehalogenans (strain 2CP-C).